Consider the following 765-residue polypeptide: MLVQDRVAPKPPKSRIRELPSRDRFAEPKILDFSSWVSDNVYRIVIIFLFIVTVAAFFFLYNTTDTASLLCFQSQSTQSLQSLTRPQINWNSIQIVSDKTSPYASFRTEKWIVVSVTKHPTEELKGLVKIKGWQVLAIGNSLTPKDWNLKGAIFLSLDAQAELNYRILDHLPYDSFVRKSVGYLFAIQHGAKKIFDADDRGEVIDGDLGKHFDVELVGEDARQEPILQYSHENPNRTVVNPYIHFGQRSVWPRGLPLENVGEINHEEYYTEVFGGKQFIQQGISNGLPDVDSVYYSTRKTTFEPFDIRFDEHSPKVALPQGMMVPVNSFNTLYHSSAFWGLMLPVSVSSMASDVIRGYWGQRLLWELGGYVAVYPPTVHRYDRVEAYPFSDEKDLHINVGRLIKFLLAWRSNKHRFFETILDLSFVMAEQGFWTELDVKFTAAWLQDLLMVGYQQPRLMSLELDRPRATIGHGDRKEFVPRKLPSVHLGVEEIGTVSSEIGNLIKWRKNFGNVVLIMFCNGPVERTALEWRLLYGRIFKTVVILSSRKNSDLYVQEAKLDHIYKRLPKIFDRYSSADGFVFVEDDTVLNYWNLLQADKTKLWTTDKVTESWTTVRPAGNSDWYSVQAELVKKIVSTMPVHFQVNYKEATKNSDGTSLTMCSSEVFYVPKRFVSDFTDLVNLVGDMDLHYKVAVPMFFLSMDSPQNFDPVLGSMVYKSEPASLNSSLSLYSAEAPAVHPWSISNEQDFIKLVREMAEGDPLLMELV.

Residues 1–43 (MLVQDRVAPKPPKSRIRELPSRDRFAEPKILDFSSWVSDNVYR) lie on the Cytoplasmic side of the membrane. The chain crosses the membrane as a helical span at residues 44 to 64 (IVIIFLFIVTVAAFFFLYNTT). The Lumenal portion of the chain corresponds to 65-765 (DTASLLCFQS…EGDPLLMELV (701 aa)). 2 N-linked (GlcNAc...) asparagine glycosylation sites follow: asparagine 235 and asparagine 723.

The protein belongs to the STELLO family. As to quaternary structure, homo- and heterodimer with STL1. Interacts with CESA1, CESA3, CESA4, CESA6, CESA7 and CESA8, but not with GOT1. In terms of tissue distribution, expressed in cells that are expanding or producing secondary cell walls.

Its subcellular location is the golgi apparatus membrane. Its function is as follows. Probable glycosyltransferase regulating the assembly and trafficking of cellulose synthase complexes. The polypeptide is Probable glycosyltransferase STELLO2 (Arabidopsis thaliana (Mouse-ear cress)).